The chain runs to 451 residues: uncharacterized protein (451 aa).

A TRAM domain is found at methionine 1–serine 59. Residues glutamine 283, tyrosine 312, glutamate 333, and aspartate 381 each coordinate S-adenosyl-L-methionine. The Nucleophile role is filled by cysteine 408.

It belongs to the class I-like SAM-binding methyltransferase superfamily. RNA M5U methyltransferase family.

This is an uncharacterized protein from Streptococcus mutans serotype c (strain ATCC 700610 / UA159).